Consider the following 957-residue polypeptide: ERC protein 2 (957 aa).

The segment covering 1–13 (MYGSARTISNPEG) has biased composition (polar residues). A disordered region spans residues 1 to 44 (MYGSARTISNPEGSPSRSPRLPRSPRLGHRRTSSGGGGGTGKTL). Over residues 14 to 25 (SPSRSPRLPRSP) the composition is skewed to low complexity. A phosphoserine mark is found at Ser-65 and Ser-666. The stretch at 140-917 (RQVRDSTMLD…RMKLMADNYD (778 aa)) forms a coiled coil. An involved in binding to RIMS1 region spans residues 760–957 (DQNKKVANLK…DQDDEEGIWA (198 aa)). A disordered region spans residues 918 to 957 (DDHHHYHHHHHHHHHRSPGRSQHSNHRPSPDQDDEEGIWA). A compositionally biased stretch (basic residues) spans 922 to 943 (HYHHHHHHHHHRSPGRSQHSNH). Positions 948 to 957 (DQDDEEGIWA) are enriched in acidic residues.

Interacts with BSN, ERC1, PPFIA1, PPFIA2, PPFIA3 and PPFIA4. Interacts through its C-terminus with the PDZ domain of RIMS1. Part of a complex consisting of ERC2, RIMS1 and UNC13A. As to expression, predominantly expressed in brain, including hippocampus, cortex, cerebellum, amygdala and olfactory bulb.

Its subcellular location is the cytoplasm. The protein localises to the synapse. It is found in the presynaptic active zone. The protein resides in the cytoskeleton. Thought to be involved in the organization of the cytomatrix at the nerve terminals active zone (CAZ) which regulates neurotransmitter release. Seems to act together with BSN. May recruit liprin-alpha proteins to the CAZ. In Rattus norvegicus (Rat), this protein is ERC protein 2 (Erc2).